A 934-amino-acid polypeptide reads, in one-letter code: Serine/threonine-protein kinase PknD (934 aa).

Residues 4 to 296 (YELIRLIGKG…ELRQALQPYL (293 aa)) enclose the Protein kinase domain. ATP contacts are provided by residues 10 to 18 (IGKGGMGEV) and lysine 33. Aspartate 138 acts as the Proton acceptor in catalysis.

The protein belongs to the protein kinase superfamily. Ser/Thr protein kinase family. Post-translationally, autophosphorylated on serine and threonine residues.

The catalysed reaction is L-seryl-[protein] + ATP = O-phospho-L-seryl-[protein] + ADP + H(+). It carries out the reaction L-threonyl-[protein] + ATP = O-phospho-L-threonyl-[protein] + ADP + H(+). Its function is as follows. Together with the serine/threonine kinase Pkn1, may play a role in the specific interactions with host proteins during intracellular growth. The protein is Serine/threonine-protein kinase PknD of Chlamydia trachomatis serovar A (strain ATCC VR-571B / DSM 19440 / HAR-13).